A 757-amino-acid polypeptide reads, in one-letter code: 5-methyltetrahydropteroyltriglutamate--homocysteine methyltransferase (757 aa).

5-methyltetrahydropteroyltri-L-glutamate is bound by residues 16–19 (RELK) and K112. L-homocysteine-binding positions include 432 to 434 (IGS) and E485. L-methionine contacts are provided by residues 432 to 434 (IGS) and E485. 5-methyltetrahydropteroyltri-L-glutamate-binding positions include 516 to 517 (RC) and W562. D600 contacts L-homocysteine. Residue D600 participates in L-methionine binding. Residue E606 coordinates 5-methyltetrahydropteroyltri-L-glutamate. Zn(2+)-binding residues include H642, C644, and E666. Catalysis depends on H695, which acts as the Proton donor. C727 lines the Zn(2+) pocket.

This sequence belongs to the vitamin-B12 independent methionine synthase family. Zn(2+) is required as a cofactor.

It carries out the reaction 5-methyltetrahydropteroyltri-L-glutamate + L-homocysteine = tetrahydropteroyltri-L-glutamate + L-methionine. Its pathway is amino-acid biosynthesis; L-methionine biosynthesis via de novo pathway; L-methionine from L-homocysteine (MetE route): step 1/1. Its function is as follows. Catalyzes the transfer of a methyl group from 5-methyltetrahydrofolate to homocysteine resulting in methionine formation. The chain is 5-methyltetrahydropteroyltriglutamate--homocysteine methyltransferase from Actinobacillus pleuropneumoniae serotype 5b (strain L20).